A 718-amino-acid chain; its full sequence is Catalase (718 aa).

Residues histidine 103 and asparagine 176 contribute to the active site. Tyrosine 390 lines the heme pocket.

The protein belongs to the catalase family. Heme is required as a cofactor.

The protein localises to the peroxisome matrix. It carries out the reaction 2 H2O2 = O2 + 2 H2O. Its function is as follows. Catalyzes the degradation of hydrogen peroxide (H(2)O(2)) generated by peroxisomal oxidases to water and oxygen, thereby protecting cells from the toxic effects of hydrogen peroxide. The sequence is that of Catalase (CAT1) from Blumeria hordei (Barley powdery mildew).